Reading from the N-terminus, the 345-residue chain is Hemin transport protein HmuS (345 aa).

This sequence to Y.enterocolitica HemS.

Functionally, part of the binding-protein-dependent transport system for hemin. In Yersinia pestis, this protein is Hemin transport protein HmuS (hmuS).